Reading from the N-terminus, the 190-residue chain is MPNITCREQPARARRGGEKHIMIRSATPVTEILVVADCWRAEAGAEAVIHRAIATAAGMVDKDTGDAELAIMLTDDAGIRTLNANWRGLDKPTNVLSFPALQPTGPCLPDDPPRMLGDIAIAYETLRREAGDERKTFDHHLSHLAVHGFLHLIGYDHETDGEAEEMESLERQILAQLGIPDPYAPPERMT.

Residues H147, H151, and H157 each contribute to the Zn(2+) site.

It belongs to the endoribonuclease YbeY family. The cofactor is Zn(2+).

It is found in the cytoplasm. Its function is as follows. Single strand-specific metallo-endoribonuclease involved in late-stage 70S ribosome quality control and in maturation of the 3' terminus of the 16S rRNA. This chain is Endoribonuclease YbeY, found in Nitrobacter winogradskyi (strain ATCC 25391 / DSM 10237 / CIP 104748 / NCIMB 11846 / Nb-255).